Reading from the N-terminus, the 2016-residue chain is Cell adhesion molecule Dscam1 (2016 aa).

Positions 1 to 28 (MNMPNERLKWLMLFAAVALIACGSQTLA) are cleaved as a signal peptide. Residues 29–1618 (ANPPDADQKG…TIRIILSNLN (1590 aa)) are Extracellular-facing. 9 consecutive Ig-like C2-type domains span residues 39–134 (PVFL…VHVR), 138–230 (AQYY…TRLS), 247–338 (PKIN…TVLT), 342–421 (PLSA…AELK), 428–522 (PPVI…AKLN), 527–613 (PYIR…LEVQ), 618–712 (PQVL…LQVN), 715–807 (PRWI…IMIS), and 812–904 (PEFT…ASIN). Residue Asn-53 is glycosylated (N-linked (GlcNAc...) asparagine). A disulfide bridge links Cys-61 with Cys-117. Zn(2+)-binding residues include Asp-144, Asn-146, and Leu-161. 13 disulfide bridges follow: Cys-160/Cys-217, Cys-160/Thr-219, Cys-160/Lys-220, Cys-269/Cys-322, Pro-270/Val-323, Ala-276/Gly-329, Cys-364/Cys-405, Cys-450/Cys-506, Cys-547/Cys-596, Cys-640/Cys-694, Val-641/Cys-694, Val-641/Ile-695, and Cys-736/Cys-790. Asn-325 is a glycosylation site (N-linked (GlcNAc...) asparagine). Residues Asn-492 and Asn-577 are each glycosylated (N-linked (GlcNAc...) asparagine). Asn-820 carries N-linked (GlcNAc...) asparagine glycosylation. Cys-833 and Cys-890 are oxidised to a cystine. Fibronectin type-III domains lie at 913-1007 (MPYA…TAEE), 1012-1116 (KPQN…TPSQ), 1117-1213 (PPSD…TEPD), and 1217-1310 (APTD…PSDQ). Residues Asn-1022, Asn-1055, and Asn-1186 are each glycosylated (N-linked (GlcNAc...) asparagine). One can recognise an Ig-like C2-type 10 domain in the interval 1312–1394 (PAKIASFDDT…ENSIAKDSIT (83 aa)). Cys-1334 and Cys-1382 form a disulfide bridge. 2 Fibronectin type-III domains span residues 1402–1495 (PPQS…TKGQ) and 1499–1594 (LPEK…TGGT). The chain crosses the membrane as a helical span at residues 1619–1639 (LVVPVVAALLVIIIAIIVICI). Residues 1640–2016 (LRSKGNHHKD…GFTAYDTMAV (377 aa)) are Cytoplasmic-facing. The PXXP motif 1; SH3-binding motif lies at 1685 to 1688 (PPVP). Residues 1688-1719 (PGSNYNTCDRIKRGRGGLRSNHSTWDPRRNPN) form a disordered region. Residues 1727-1730 (PPVP) carry the PXXP motif 2; SH3-binding motif. 2 disordered regions span residues 1787 to 1846 (GHAG…DDPA) and 1862 to 2016 (SQGG…TMAV). Residues 1826-1836 (KNSQGGQSSIY) are compositionally biased toward polar residues. A YXXP motif 1; potential SH2-binding motif is present at residues 1842–1845 (YDDP). Positions 1875–1878 (YDDP) match the YXXP motif 2; potential SH2-binding motif. Over residues 1897–1918 (GQPYDHYGSRGSMGRRSIGSAR) the composition is skewed to low complexity. The Polyproline tract (probable SH3-binding) signature appears at 1925–1932 (PEPPPPPP). 2 stretches are compositionally biased toward basic and acidic residues: residues 1944–1962 (DSKE…DHGP) and 1974–1993 (QPKD…RNET). Positions 1994-2004 (GPKQLQLQQAN) are enriched in polar residues.

In terms of assembly, homodimer (via extracellular region); alternative splicing produces a potential 19,008 different ectodomains and the majority of these show strong isoform-specific homodimerization. Interacts (via cytoplasmic domain) with dock/dreadlocks (via SH2 and SH3 domains); the interaction is direct and may require Dscam1 to be phosphorylated. Post-translationally, phosphorylated on tyrosine residues in the intracellular domain. Tyrosine protein kinase Src42A and possibly Src64B are involved in this phosphorylation. Glycosylation on Asn-53 and Asn-325 is involved in stabilizing dimerization. In terms of processing, proteolytically processed, probably to generate a secreted form. Secreted into the hemolymph (at protein level). Expressed in brain and eye-antennal imaginal disks, including R3/R4 and R7 photoreceptor cells. Individual R3/R4 cells express between 14 and 50 randomly generated mRNAs encoding distinct isoforms.

The protein resides in the cell membrane. Its subcellular location is the cell projection. It localises to the neuron projection. The protein localises to the axon. It is found in the perikaryon. The protein resides in the dendrite. Its subcellular location is the secreted. In terms of biological role, cell surface receptor involved in guidance and targeting of growing nerve axons. Required during Bolwig's organ differentiation for accurate and efficient targeting of photoreceptor neuron axons to their synaptic targets in the brain via the P2 intermediate target neuron. Involved in isoneural self-avoidance during dendrite arborization but not in heteroneural recognition and repulsion during tiling by related neurons of the same class. Involved in regulating axon bifurcation and divergent extension in the developing mushroom body. Essential for axon arborisation in ellipsoid body. Exhibits an extraordinary level of molecular diversity resulting from alternative splicing. Isoforms differing in their ectodomain makeup show a high degree of functional redundancy while isoforms with different transmembrane domains are involved in different neuronal morphogenetic processes and are differentially targeted to dendrites or axons. The vast majority of isoforms exhibit strong isoform-specific homophilic binding. Individual cells express a distinct randomly generated repertoire of isoforms. Cell surfaces bearing identical repertoires of Dscam1 isoforms, such as those from the same cell, trigger recognition and avoidance. A subset of isoforms is expressed in fat body cells and hemocytes, cells that are part of the insect immune response, and these isoforms are secreted into the hemolymph. The secreted form comprising the ectodomain can bind to bacteria, such as Escherichia coli, and may act as an opsonin enhancing their phagocytosis by hemocytes. The sequence is that of Cell adhesion molecule Dscam1 from Drosophila melanogaster (Fruit fly).